Reading from the N-terminus, the 168-residue chain is Transcription elongation factor GreB (168 aa).

The protein belongs to the GreA/GreB family. GreB subfamily.

Functionally, necessary for efficient RNA polymerase transcription elongation past template-encoded arresting sites. The arresting sites in DNA have the property of trapping a certain fraction of elongating RNA polymerases that pass through, resulting in locked ternary complexes. Cleavage of the nascent transcript by cleavage factors such as GreA or GreB allows the resumption of elongation from the new 3'terminus. GreB releases sequences of up to 9 nucleotides in length. In Xanthomonas axonopodis pv. citri (strain 306), this protein is Transcription elongation factor GreB.